Consider the following 299-residue polypeptide: Pyridoxal 5'-phosphate synthase subunit PdxS (299 aa).

Residue aspartate 29 participates in D-ribose 5-phosphate binding. Catalysis depends on lysine 86, which acts as the Schiff-base intermediate with D-ribose 5-phosphate. Glycine 158 contributes to the D-ribose 5-phosphate binding site. A D-glyceraldehyde 3-phosphate-binding site is contributed by arginine 170. Residues glycine 219 and 240–241 (GS) each bind D-ribose 5-phosphate.

The protein belongs to the PdxS/SNZ family. In the presence of PdxT, forms a dodecamer of heterodimers.

It catalyses the reaction aldehydo-D-ribose 5-phosphate + D-glyceraldehyde 3-phosphate + L-glutamine = pyridoxal 5'-phosphate + L-glutamate + phosphate + 3 H2O + H(+). It participates in cofactor biosynthesis; pyridoxal 5'-phosphate biosynthesis. Its function is as follows. Catalyzes the formation of pyridoxal 5'-phosphate from ribose 5-phosphate (RBP), glyceraldehyde 3-phosphate (G3P) and ammonia. The ammonia is provided by the PdxT subunit. Can also use ribulose 5-phosphate and dihydroxyacetone phosphate as substrates, resulting from enzyme-catalyzed isomerization of RBP and G3P, respectively. This chain is Pyridoxal 5'-phosphate synthase subunit PdxS, found in Protochlamydia amoebophila (strain UWE25).